We begin with the raw amino-acid sequence, 240 residues long: Urease accessory protein UreD (240 aa).

The protein belongs to the UreD family. In terms of assembly, ureD, UreF and UreG form a complex that acts as a GTP-hydrolysis-dependent molecular chaperone, activating the urease apoprotein by helping to assemble the nickel containing metallocenter of UreC. The UreE protein probably delivers the nickel.

It is found in the cytoplasm. Required for maturation of urease via the functional incorporation of the urease nickel metallocenter. The chain is Urease accessory protein UreD from Granulibacter bethesdensis (strain ATCC BAA-1260 / CGDNIH1).